Reading from the N-terminus, the 109-residue chain is Flagellar hook-basal body complex protein FliE (109 aa).

This sequence belongs to the FliE family.

Its subcellular location is the bacterial flagellum basal body. This is Flagellar hook-basal body complex protein FliE from Nitrosomonas eutropha (strain DSM 101675 / C91 / Nm57).